The sequence spans 340 residues: MNFKSICLIILLSALIIPYIPQNIYFFPHRNTTGATISSGLYVNPYLYYTSPPAPAGIASFGLYNYSGNVTPYVITTNEMLGYVNITSLLAYNREALRYGVDPYSATLQFNIVLSVNTSNGVYAYWLQDVGQFQTNKNSLTFIDNVWNLTGSLSTLSSSAITGNGQVASAGGGQTFYYDVGPSYTYSFPLSYIYIINMSYTSNAVYVWIGYEIIQIGQTEYGTVNYYDKITIYQPNIISASLMINGNNYTPNGLYYDAELVWGGGGNGAPTSFNSLNCTLGLYYISNGSITPVPSLYTFGADTAEAAYNVYTTMNNGVPIAYNGIENLTILTNNFSVILI.

A signal peptide spans 1–28; the sequence is MNFKSICLIILLSALIIPYIPQNIYFFP. Residues 29 to 41 constitute a propeptide that is removed on maturation; the sequence is HRNTTGATISSGL. N-linked (GlcNAc...) asparagine glycans are attached at residues N31, N65, N85, N117, N148, N197, N277, N287, N327, and N334.

It belongs to the peptidase A5 family.

The protein localises to the secreted. The catalysed reaction is Specificity similar to pepsin A, prefers bulky hydrophobic side-chains on either side of the scissible bond.. May represent a new class of acid proteases. It digests proteins and peptides in acidic solution. The chain is Thermopsin (thpS) from Sulfolobus acidocaldarius (strain ATCC 33909 / DSM 639 / JCM 8929 / NBRC 15157 / NCIMB 11770).